A 265-amino-acid polypeptide reads, in one-letter code: 2-C-methyl-D-erythritol 4-phosphate cytidylyltransferase (265 aa).

The span at 231–241 shows a compositional bias: basic and acidic residues; the sequence is DRGGASREAER. The interval 231–265 is disordered; it reads DRGGASREAERSAMPSAATSVFSGARSAASGSEEV. The segment covering 253-265 has biased composition (low complexity); it reads SGARSAASGSEEV.

It belongs to the IspD/TarI cytidylyltransferase family. IspD subfamily.

The enzyme catalyses 2-C-methyl-D-erythritol 4-phosphate + CTP + H(+) = 4-CDP-2-C-methyl-D-erythritol + diphosphate. It participates in isoprenoid biosynthesis; isopentenyl diphosphate biosynthesis via DXP pathway; isopentenyl diphosphate from 1-deoxy-D-xylulose 5-phosphate: step 2/6. Its function is as follows. Catalyzes the formation of 4-diphosphocytidyl-2-C-methyl-D-erythritol from CTP and 2-C-methyl-D-erythritol 4-phosphate (MEP). The chain is 2-C-methyl-D-erythritol 4-phosphate cytidylyltransferase from Xanthomonas campestris pv. campestris (strain B100).